The sequence spans 204 residues: Probable nicotinate-nucleotide adenylyltransferase (204 aa).

This sequence belongs to the NadD family.

It carries out the reaction nicotinate beta-D-ribonucleotide + ATP + H(+) = deamido-NAD(+) + diphosphate. It functions in the pathway cofactor biosynthesis; NAD(+) biosynthesis; deamido-NAD(+) from nicotinate D-ribonucleotide: step 1/1. In terms of biological role, catalyzes the reversible adenylation of nicotinate mononucleotide (NaMN) to nicotinic acid adenine dinucleotide (NaAD). The polypeptide is Probable nicotinate-nucleotide adenylyltransferase (Methylacidiphilum infernorum (isolate V4) (Methylokorus infernorum (strain V4))).